A 461-amino-acid polypeptide reads, in one-letter code: Mannan endo-1,4-beta-mannosidase 4 (461 aa).

Residues tryptophan 80 and asparagine 195 each contribute to the substrate site. Catalysis depends on glutamate 196, which acts as the Proton donor. Tyrosine 274 contributes to the substrate binding site. Glutamate 314 serves as the catalytic Nucleophile. Substrate contacts are provided by tryptophan 357 and aspartate 364.

It belongs to the glycosyl hydrolase 5 (cellulase A) family. Ubiquitous.

The catalysed reaction is Random hydrolysis of (1-&gt;4)-beta-D-mannosidic linkages in mannans, galactomannans and glucomannans.. This Oryza sativa subsp. japonica (Rice) protein is Mannan endo-1,4-beta-mannosidase 4 (MAN4).